The primary structure comprises 1051 residues: MSSSNSSSAVRSSAKHAAERIQQHLPPNSNHAVSLSSSSLNLPARTSIVAPGIAHSSRLKDRPSASSSSSSSSVSASSPSTRRSGTPVRRSQSKDFDDDNDPGRVRVSVRVRPRNGEELISDADFADLVELQPEIKRLKLRKNNWNSESYKFDEVFTDTASQKRVYEGVAKPVVEGVLSGYNGTIMAYGQTGTGKTYTVGKIGKDDAAERGIMVRALEDILLNASSASISVEISYLQLYMETIQDLLAPEKNNISINEDAKTGEVSVPGATVVNIQDLDHFLQVLQVGETNRHAANTKMNTESSRSHAILTVYVRRAMNEKTEKAKPESLGDKAIPRVRKSKLLIVDLAGSERINKSGTDGHMIEEAKFINLSLTSLGKCINALAEGSSHIPTRDSKLTRLLRDSFGGSARTSLIITIGPSARYHAETTSTIMFGQRAMKIVNMVKLKEEFDYESLCRKLETQVDHLTAEVERQNKLRNSEKHELEKRLRECENSFAEAEKNAVTRSKFLEKENTRLELSMKELLKDLQLQKDQCDLMHDKAIQLEMKLKNTKQQQLENSAYEAKLADTSQVYEKKIAELVQRVEDEQARSTNAEHQLTEMKNILSKQQKSIHEQEKGNYQYQRELAETTHTYESKIAELQKKLEGENARSNAAEDQLRQMKRLISDRQVISQENEEANELKIKLEELSQMYESTVDELQTVKLDYDDLLQQKEKLGEEVRDMKERLLLEEKQRKQMESELSKLKKNLRESENVVEEKRYMKEDLSKGSAESGAQTGSQRSQGLKKSLSGQRATMARLCEEVGIQKILQLIKSEDLEVQIQAVKVVANLAAEEANQVKIVEEGGVEALLMLVQSSQNSTILRVASGAIANLAMNEKSQDLIMNKGGAQLLAKMVTKTDDPQTLRMVAGALANLCGNEKFLKLLKEEEGIKGLLTMAQSGNIDIIAQVARGMANFAKCETREIMQGRRKGRSLLLEEGVLEWLTSNSHIDSASTQRHIELALCHLAQNEENANDFKRTGSVTEIVRISVESSRDDIRSLAKKILKTNPYFSS.

3 stretches are compositionally biased toward low complexity: residues 1 to 12, 28 to 39, and 64 to 90; these read MSSSNSSSAVRS, NSNHAVSLSSSS, and SASSSSSSSSVSASSPSTRRSGTPVRR. Disordered stretches follow at residues 1–39 and 51–109; these read MSSSNSSSAVRSSAKHAAERIQQHLPPNSNHAVSLSSSS and PGIA…RVSV. The Kinesin motor domain maps to 104–441; that stretch reads RVRVSVRVRP…IMFGQRAMKI (338 aa). Residue 189-196 coordinates ATP; the sequence is GQTGTGKT. Positions 411–419 match the D-BOX motif; it reads RTSLIITIG. Coiled-coil stretches lie at residues 452-534 and 568-761; these read DYES…QKDQ and DTSQ…KRYM. The segment covering 753–766 has biased composition (basic and acidic residues); the sequence is NVVEEKRYMKEDLS. Residues 753-788 are disordered; sequence NVVEEKRYMKEDLSKGSAESGAQTGSQRSQGLKKSL. The span at 772-788 shows a compositional bias: polar residues; the sequence is SGAQTGSQRSQGLKKSL. ARM repeat units lie at residues 792–831, 833–873, and 875–915; these read RATMARLCEEVGIQKILQLIKSEDLEVQIQAVKVVANLAA, EANQ…NLAM, and EKSQ…NLCG. The stretch at 917–956 is one ARM 4; degenerate repeat; the sequence is EKFLKLLKEEEGIKGLLTMAQSGNIDIIAQVARGMANFAK.

This sequence belongs to the TRAFAC class myosin-kinesin ATPase superfamily. Kinesin family. Ungrouped subfamily. In terms of assembly, interacts (via C-terminus) with NEK5. As to expression, expressed in young root hair-forming cells and in root hair-producing cells at the boundary between the hypocotyl and root. Expressed in cotyledons, young leaves, trichomes and flowers.

The protein localises to the cytoplasm. The protein resides in the cytoskeleton. It is found in the spindle. Its subcellular location is the phragmoplast. Its function is as follows. Acts as a plus-end microtubule-dependent motor protein. Involved in the control of root hair tip growth by promoting microtubule depolymerization and limiting the accumulation of endoplasmic microtubules. In vitro, binds to polymerized actin through ARM repeats, and to polymerized tubulin through N-terminal motor domain. This Arabidopsis thaliana (Mouse-ear cress) protein is Kinesin-like protein KIN-UC.